The following is a 183-amino-acid chain: Large ribosomal subunit protein eL18 (183 aa).

The disordered stretch occupies residues 146–183; the sequence is HFGPAPGVPHSHTKPYVRSKGRKFEKARGRRKSRGFRV. Basic residues-rich tracts occupy residues 156–166 and 173–183; these read SHTKPYVRSKG and RGRRKSRGFRV.

This sequence belongs to the eukaryotic ribosomal protein eL18 family.

This Cicer arietinum (Chickpea) protein is Large ribosomal subunit protein eL18 (RPL18).